Here is a 312-residue protein sequence, read N- to C-terminus: RNA pseudouridylate synthase domain-containing protein 1 (312 aa).

N-acetylmethionine is present on M1. D67 is an active-site residue. Positions 256 to 298 are disordered; it reads ATPDPDPEDRGPRPGSPSALLPGPGRPPPPPTKPPETEAQRGP. Residues 279 to 289 are compositionally biased toward pro residues; sequence PGRPPPPPTKP.

It belongs to the pseudouridine synthase RluA family.

This is RNA pseudouridylate synthase domain-containing protein 1 (RPUSD1) from Homo sapiens (Human).